A 529-amino-acid polypeptide reads, in one-letter code: Bifunctional purine biosynthesis protein PurH (529 aa).

The MGS-like domain occupies 2–149 (TDLSPVRRAL…KNHAFVNVVV (148 aa)).

It belongs to the PurH family.

It carries out the reaction (6R)-10-formyltetrahydrofolate + 5-amino-1-(5-phospho-beta-D-ribosyl)imidazole-4-carboxamide = 5-formamido-1-(5-phospho-D-ribosyl)imidazole-4-carboxamide + (6S)-5,6,7,8-tetrahydrofolate. The enzyme catalyses IMP + H2O = 5-formamido-1-(5-phospho-D-ribosyl)imidazole-4-carboxamide. Its pathway is purine metabolism; IMP biosynthesis via de novo pathway; 5-formamido-1-(5-phospho-D-ribosyl)imidazole-4-carboxamide from 5-amino-1-(5-phospho-D-ribosyl)imidazole-4-carboxamide (10-formyl THF route): step 1/1. It functions in the pathway purine metabolism; IMP biosynthesis via de novo pathway; IMP from 5-formamido-1-(5-phospho-D-ribosyl)imidazole-4-carboxamide: step 1/1. In Ruegeria pomeroyi (strain ATCC 700808 / DSM 15171 / DSS-3) (Silicibacter pomeroyi), this protein is Bifunctional purine biosynthesis protein PurH.